Consider the following 664-residue polypeptide: DNA ligase (664 aa).

NAD(+) contacts are provided by residues Asp-32–Asp-36 and Ser-80–Leu-81. Lys-122 (N6-AMP-lysine intermediate) is an active-site residue. NAD(+)-binding residues include Arg-144, Glu-178, and Lys-314. Residues Cys-407, Cys-410, Cys-423, and Cys-429 each contribute to the Zn(2+) site. The BRCT domain maps to Ile-587 to Lys-664.

This sequence belongs to the NAD-dependent DNA ligase family. LigA subfamily. Mg(2+) serves as cofactor. It depends on Mn(2+) as a cofactor.

It carries out the reaction NAD(+) + (deoxyribonucleotide)n-3'-hydroxyl + 5'-phospho-(deoxyribonucleotide)m = (deoxyribonucleotide)n+m + AMP + beta-nicotinamide D-nucleotide.. DNA ligase that catalyzes the formation of phosphodiester linkages between 5'-phosphoryl and 3'-hydroxyl groups in double-stranded DNA using NAD as a coenzyme and as the energy source for the reaction. It is essential for DNA replication and repair of damaged DNA. The chain is DNA ligase from Clostridium botulinum (strain ATCC 19397 / Type A).